Reading from the N-terminus, the 91-residue chain is DNA-directed RNA polymerase subunit Rpo11 (91 aa).

Belongs to the archaeal Rpo11/eukaryotic RPB11/RPC19 RNA polymerase subunit family. As to quaternary structure, part of the RNA polymerase complex.

Its subcellular location is the cytoplasm. It carries out the reaction RNA(n) + a ribonucleoside 5'-triphosphate = RNA(n+1) + diphosphate. Functionally, DNA-dependent RNA polymerase (RNAP) catalyzes the transcription of DNA into RNA using the four ribonucleoside triphosphates as substrates. The polypeptide is DNA-directed RNA polymerase subunit Rpo11 (Methanococcoides burtonii (strain DSM 6242 / NBRC 107633 / OCM 468 / ACE-M)).